The following is a 7094-amino-acid chain: Replicase polyprotein 1ab (7094 aa).

The CoV Nsp1 globular domain maps to 54-196 (PENHVMVDCR…PWVMYLRKCG (143 aa)). One can recognise a BetaCoV Nsp1 C-terminal domain in the interval 216–246 (FKVEDAYDLVHDEPKGKFSKKAYALIRGYRG). Positions 250–519 (LLYVDQYGCD…LICKALYLDY (270 aa)) constitute a CoV Nsp2 N-terminal domain. Residues Cys392, Cys397, Cys413, and Cys416 each contribute to the Zn(2+) site. The C4 stretch occupies residues 392-416 (CEQDLCDFKGWVPGNMIDGFACTTC). Residues 524–713 (CGNLHQRELL…AQAFRSVAKV (190 aa)) enclose the CoV Nsp2 middle domain. The region spanning 733–851 (RRRICLSGSK…LDQAWRVPCA (119 aa)) is the CoV Nsp2 C-terminal domain. The 114-residue stretch at 853-966 (RCVTFKEQPT…LYCAFTAPED (114 aa)) folds into the Ubiquitin-like 1 domain. Positions 972-986 (ESGVEEDDVEGEETD) are enriched in acidic residues. The tract at residues 972–992 (ESGVEEDDVEGEETDLTVTSA) is disordered. The Peptidase C16 1 domain occupies 1036-1274 (DLESVIQDYE…IAQLYGSCIT (239 aa)). The active-site For PL1-PRO activity is the Cys1074. Zn(2+)-binding residues include Cys1151, Cys1154, Cys1177, and Cys1179. The segment at 1151–1179 (CIKCDLALKLKGLDAMFFYGDVVSHVCKC) adopts a C4-type 1 zinc-finger fold. Residues His1225 and Asp1236 each act as for PL1-PRO activity in the active site. The Macro domain maps to 1275 to 1435 (PNVCFVKGDI…LISKCQITAV (161 aa)). Residues 1491 to 1563 (DDARTFVQSN…VAQIKALFLD (73 aa)) form the DPUP domain. Residues 1562-1617 (LDKVDILLTVDGVNFTNRFVPVGESFGKSLGNVFCDGVNVTKHKCDINYKGKVFFQ) form the Ubiquitin-like 2 domain. A Peptidase C16 2 domain is found at 1631–1892 (SSFNFDQKEL…KIEYKPDLSQ (262 aa)). The active-site For PL2-PRO activity is the Cys1671. Zn(2+) contacts are provided by Cys1749, Cys1751, Cys1783, and Cys1785. A C4-type 2 zinc finger spans residues 1749–1785 (CKCGVKQEQRTGVDAVMHFGTLSREDLEIGYTVDCSC). Residues His1828 and Asp1842 each act as for PL2-PRO activity in the active site. One can recognise a Nucleic acid-binding domain in the interval 1906 to 2007 (IKAQFKTFEK…TYFNRPLLVD (102 aa)). Residues 2020-2169 (DDGGDISESD…ADNKVIYTTE (150 aa)) form the G2M domain. The next 3 helical transmembrane spans lie at 2138 to 2158 (ISAC…WIKI), 2199 to 2219 (ACII…NVIF), and 2221 to 2241 (DFYL…AQWI). The segment at 2138–2385 (ISACFNFIKW…ASFIKLFSLF (248 aa)) is HD1. The 62-residue stretch at 2235–2296 (GKIAQWIKNT…AIDVVQYEAD (62 aa)) folds into the 3Ecto domain. 2 disulfides stabilise this stretch: Cys2251–Cys2275 and Cys2266–Cys2272. Helical transmembrane passes span 2313–2333 (LIVS…LISI), 2343–2363 (LFML…ANML), and 2365–2385 (AHVF…FSLF). The Y1 stretch occupies residues 2383–2473 (SLFRHVAYGC…ELKRPIQPTD (91 aa)). Residues 2383–2750 (SLFRHVAYGC…LTTPFSLKGG (368 aa)) enclose the CoV Nsp3 Y domain. 8 residues coordinate Zn(2+): His2387, Cys2392, Cys2397, Cys2400, Cys2433, His2436, Cys2440, and Cys2443. A ZF1 region spans residues 2387–2400 (HVAYGCSKSGCLFC). Residues 2433-2443 (CSKHQWNCIDC) are ZF2. The tract at residues 2474 to 2566 (VAYHTVTDVK…MVDKNLITTA (93 aa)) is Y2. Residues 2474–2750 (VAYHTVTDVK…LTTPFSLKGG (277 aa)) are coV-Y. Residues 2567–2649 (NTGTSVTETM…DSVMSAVSAG (83 aa)) are Y3. The tract at residues 2650–2750 (LELTDESCNN…LTTPFSLKGG (101 aa)) is Y4. 5 helical membrane-spanning segments follow: residues 2752 to 2772 (VFSY…IGLW), 3031 to 3051 (ASSI…YYLI), 3063 to 3083 (IVFV…VFQV), 3090 to 3110 (VYAI…SVIM), and 3115 to 3135 (LVMY…SVVV). Residues 2752–3135 (VFSYFVYVCF…FCLLYISVVV (384 aa)) form an HD2 region. The region spanning 3149 to 3246 (LGTSVRSDGT…TASVSTSFLQ (98 aa)) is the Nsp4C domain. The region spanning 3247 to 3549 (SGIVKMVNPT…YQQLAGIKLQ (303 aa)) is the Peptidase C30 domain. Residues His3287 and Cys3391 each act as for 3CL-PRO activity in the active site. 7 helical membrane passes run 3558 to 3578 (GIVC…TAFV), 3588 to 3608 (TNML…MLLV), 3615 to 3635 (LTMY…LVVY), 3657 to 3677 (TYTD…FVTL), 3684 to 3704 (LFSF…WYMG), 3711 to 3731 (ILLM…LSMA), and 3755 to 3775 (IVLV…GLFS). The segment at 3558–3775 (GIVCWIMAST…IISCYWGLFS (218 aa)) is HD3. A RdRp Nsp7 cofactor domain is found at 3837–3925 (SKLTDVKCAN…DYAKDNTVLQ (89 aa)). Positions 3926–4122 (ALQSEFVNMA…HNEVSATALQ (197 aa)) constitute a RdRp Nsp8 cofactor domain. Residues 4123 to 4232 (NNELMPAKLK…GTISSTVRLQ (110 aa)) form the Nsp9 ssRNA-binding domain. An ExoN/MTase coactivator domain is found at 4233 to 4370 (AGTATEYASN…CVSTDTTVQS (138 aa)). Zn(2+) is bound by residues Cys4306, Cys4309, His4315, Cys4322, Cys4348, Cys4351, Cys4359, and Cys4361. 2 zinc fingers span residues 4306–4322 (CIYC…DGLC) and 4348–4361 (CQVC…SCSC). In terms of domain architecture, NiRAN spans 4375 to 4630 (FLNRVRGTSV…DCELYVNNAY (256 aa)). Positions 4578 and 4587 each coordinate Mn(2+). One can recognise a Nsp12 Interface domain in the interval 4631-4729 (RLFDLVQYDF…MNMDVDTHRY (99 aa)). Zn(2+) contacts are provided by His4660, Cys4666, Cys4671, Cys4675, and Cys4852. The Nsp12 RNA-dependent RNA polymerase domain occupies 4730-5297 (RLSLKDLLLY…NMYLRSAVMQ (568 aa)). Residues 4732–4946 (SLKDLLLYAA…HQKCLKSIAA (215 aa)) form a rdRp Fingers N-ter region. The interval 4947 to 4985 (TRGVPVVIGTTKFYGGWDDMLRRLIKDVDNPVLMGWDYP) is rdRp Palm N-ter. Residues 4977–5139 (PVLMGWDYPK…CYNSDYASKG (163 aa)) form the RdRp catalytic domain. The tract at residues 4986 to 5044 (KCDRAMPNILRIVSSLVLARKHEACCSQSDRFYRLANEYAQVLSEIVMCGGCYYVKPGG) is rdRp Fingers C-ter. His5007, Cys5010, and Cys5011 together coordinate Zn(2+). The interval 5045 to 5180 (TSSGDATTAF…NNGPHEFCSQ (136 aa)) is rdRp Palm C-ter. Catalysis depends on residues Ser5124, Asp5125, and Asp5126. The rdRp Thumb stretch occupies residues 5181-5297 (HTMLVKMDGD…NMYLRSAVMQ (117 aa)). Residues 5298–5410 (SVGACVVCSS…DDFNRIASCK (113 aa)) form the CV ZBD domain. The Zn(2+) site is built by Cys5302, Cys5305, Cys5313, Cys5316, Cys5323, Cys5326, His5330, His5336, Cys5347, Cys5352, Cys5369, and His5372. The (+)RNA virus helicase ATP-binding domain occupies 5553–5734 (SVLETFQNNV…MCCLGPDIFL (182 aa)). 5578–5585 (GPPGTGKS) contacts ATP. The 170-residue stretch at 5735–5904 (GTCYRCPKEI…VETRVQCSTN (170 aa)) folds into the (+)RNA virus helicase C-terminal domain. Positions 5971 to 6186 (LFITKEEAVK…RCLAVYDCFC (216 aa)) constitute an ExoN domain. Catalysis depends on residues Asp5989, Glu5991, and Glu6090. 7 residues coordinate Zn(2+): Cys6106, Cys6109, Cys6125, His6128, His6156, Cys6160, and His6163. Catalysis depends on residues His6167 and Asp6172. Cys6178 is a Zn(2+) binding site. Residues 6195-6421 (YPIISNELSI…NLWNTFTKLQ (227 aa)) form the N7-MTase domain. 6230 to 6236 (DIGNPKA) contributes to the S-adenosyl-L-methionine binding site. Residues 6308-6322 (CNGGSLYVNKHAFHT) are gpppA-binding. Residues Cys6346, Cys6367, Cys6378, and His6381 each contribute to the Zn(2+) site. The region spanning 6422 to 6482 (SLENVVYNLV…NVAVELFAKR (61 aa)) is the Nsp15 N-terminal oligomerization domain. The region spanning 6483-6603 (SIRHHPELKL…FAVRKEGQDV (121 aa)) is the AV-Nsp11N/CoV-Nsp15M domain. One can recognise a NendoU domain in the interval 6653–6792 (TCRTDMEKDF…NDEKVMTFYL (140 aa)). Active-site residues include His6683, His6698, Lys6738, Lys6841, Asp6925, Lys6965, and Glu6998. A Nidovirus-type SAM-dependent 2'-O-MTase domain is found at 6797–7091 (ASDWKPGYSM…KEVFVGDSMV (295 aa)).

This sequence belongs to the coronaviruses polyprotein 1ab family. In terms of assembly, interacts with host PHB and PHB2. As to quaternary structure, interacts with papain-like protease nsp3 and non-structural protein 6. Monomer. Homodimer. Only the homodimer shows catalytic activity. In terms of assembly, interacts with nsp8 and nsp12 to form the replication-transcription complex (RTC): nsp12, nsp7, two subunits of nsp8, and up to two subunits of nsp13. As to quaternary structure, interacts with nsp7, nsp13 and nsp12 to form the replication-transcription complex (RTC): nsp12, nsp7, two subunits of nsp8, and up to two subunits of nsp13. Interacts with nsp12. In terms of assembly, interacts with proofreading exoribonuclease nsp14 and 2'-O-methyltransferase nsp16; these interactions enhance nsp14 and nsp16 enzymatic activities. As to quaternary structure, interacts with nsp7 and nsp8 to form the replication-transcription complex (RTC): nsp12, nsp7, two subunits of nsp8, and up to two subunits of nsp13. Interacts with nsp9. Interacts with nsp8 to form the replication-transcription complex (RTC): nsp12, nsp7, two subunits of nsp8, and up to two subunits of nsp13. Mn(2+) is required as a cofactor. Mg(2+) serves as cofactor. Post-translationally, specific enzymatic cleavages in vivo by its own proteases yield mature proteins. 3CL-PRO and PL-PRO proteinases are autocatalytically processed.

It localises to the host membrane. The protein localises to the host cytoplasm. It is found in the host perinuclear region. The protein resides in the host endoplasmic reticulum-Golgi intermediate compartment. It carries out the reaction RNA(n) + a ribonucleoside 5'-triphosphate = RNA(n+1) + diphosphate. The enzyme catalyses ATP + H2O = ADP + phosphate + H(+). It catalyses the reaction Thiol-dependent hydrolysis of ester, thioester, amide, peptide and isopeptide bonds formed by the C-terminal Gly of ubiquitin (a 76-residue protein attached to proteins as an intracellular targeting signal).. The catalysed reaction is a 5'-end (N(7)-methyl 5'-triphosphoguanosine)-ribonucleoside in mRNA + S-adenosyl-L-methionine = a 5'-end (N(7)-methyl 5'-triphosphoguanosine)-(2'-O-methyl-ribonucleoside) in mRNA + S-adenosyl-L-homocysteine + H(+). It carries out the reaction uridylyl-uridylyl-ribonucleotide-RNA = a 3'-end uridylyl-2',3'-cyclophospho-uridine-RNA + a 5'-end dephospho-ribonucleoside-RNA. The enzyme catalyses a 5'-end diphospho-ribonucleoside in mRNA + GTP + H(+) = a 5'-end (5'-triphosphoguanosine)-ribonucleoside in mRNA + diphosphate. It catalyses the reaction a 5'-end (5'-triphosphoguanosine)-ribonucleoside in mRNA + S-adenosyl-L-methionine = a 5'-end (N(7)-methyl 5'-triphosphoguanosine)-ribonucleoside in mRNA + S-adenosyl-L-homocysteine. Functionally, the replicase polyprotein of coronaviruses is a multifunctional protein: it contains the activities necessary for the transcription of negative stranded RNA, leader RNA, subgenomic mRNAs and progeny virion RNA as well as proteinases responsible for the cleavage of the polyprotein into functional products. In terms of biological role, inhibits host translation by interacting with the 40S ribosomal subunit. The nsp1-40S ribosome complex further induces an endonucleolytic cleavage near the 5'UTR of host mRNAs, targeting them for degradation. Viral mRNAs are not susceptible to nsp1-mediated endonucleolytic RNA cleavage thanks to the presence of a 5'-end leader sequence and are therefore protected from degradation. By suppressing host gene expression, nsp1 facilitates efficient viral gene expression in infected cells and evasion from host immune response. May play a role in the modulation of host cell survival signaling pathway by interacting with host PHB and PHB2. Indeed, these two proteins play a role in maintaining the functional integrity of the mitochondria and protecting cells from various stresses. Its function is as follows. Responsible for the cleavages located at the N-terminus of the replicase polyprotein. In addition, PL-PRO possesses a deubiquitinating/deISGylating activity and processes both 'Lys-48'- and 'Lys-63'-linked polyubiquitin chains from cellular substrates. Participates together with nsp4 in the assembly of virally-induced cytoplasmic double-membrane vesicles necessary for viral replication. Antagonizes innate immune induction of type I interferon by blocking the phosphorylation, dimerization and subsequent nuclear translocation of host IRF3. Also prevents host NF-kappa-B signaling. Functionally, participates in the assembly of virally-induced cytoplasmic double-membrane vesicles necessary for viral replication. In terms of biological role, cleaves the C-terminus of replicase polyprotein at 11 sites. Recognizes substrates containing the core sequence [ILMVF]-Q-|-[SGACN]. Also able to bind an ADP-ribose-1''-phosphate (ADRP). Plays a role in the initial induction of autophagosomes from host endoplasmic reticulum. Later, limits the expansion of these phagosomes that are no longer able to deliver viral components to lysosomes. Its function is as follows. Forms a hexadecamer with nsp8 (8 subunits of each) that may participate in viral replication by acting as a primase. Alternatively, may synthesize substantially longer products than oligonucleotide primers. Functionally, forms a hexadecamer with nsp7 (8 subunits of each) that may participate in viral replication by acting as a primase. Alternatively, may synthesize substantially longer products than oligonucleotide primers. In terms of biological role, forms a primer, NSP9-pU, which is utilized by the polymerase for the initiation of RNA chains. Interacts with ribosome signal recognition particle RNA (SRP). Together with NSP8, suppress protein integration into the cell membrane, thereby disrupting host immune defenses. Plays a pivotal role in viral transcription by stimulating both nsp14 3'-5' exoribonuclease and nsp16 2'-O-methyltransferase activities. Therefore plays an essential role in viral mRNAs cap methylation. Its function is as follows. RNA-directed RNA polymerase that catalyzes the transcription of viral genomic and subgenomic RNAs. Acts in complex with nsp7 and nsp8 to transcribe both the minus and positive strands of genomic RNA. The kinase-like NiRAN domain of NSP12 attaches one or more nucleotides to the amino terminus of NSP9, forming a covalent RNA-protein intermediate that serves as transcription/replication primer. Subgenomic RNAs (sgRNAs) are formed by discontinuous transcription: The polymerase has the ability to pause at transcription-regulating sequences (TRS) and jump to the leader TRS, resulting in a major deletion. This creates a series of subgenomic RNAs that are replicated, transcribed and translated. In addition, Nsp12 is a subunit of the viral RNA capping enzyme that catalyzes the RNA guanylyltransferase reaction for genomic and sub-genomic RNAs. Subsequently, the NiRAN domain transfers RNA to GDP, and forms the core cap structure GpppA-RNA. Functionally, multi-functional protein with a zinc-binding domain in N-terminus displaying RNA and DNA duplex-unwinding activities with 5' to 3' polarity. Activity of helicase is dependent on magnesium. In terms of biological role, plays a role in viral RNA synthesis through two distinct activities. The N7-guanine methyltransferase activity plays a role in the formation of the cap structure GpppA-RNA. The proofreading exoribonuclease reduces the sensitivity of the virus to RNA mutagens during replication. This activity acts on both ssRNA and dsRNA in a 3'-5' direction. Plays a role in viral transcription/replication and prevents the simultaneous activation of host cell dsRNA sensors, such as MDA5/IFIH1, OAS, and PKR. Acts by degrading the 5'-polyuridines generated during replication of the poly(A) region of viral genomic and subgenomic RNAs. Catalyzes a two-step reaction in which a 2'3'-cyclic phosphate (2'3'-cP) is first generated by 2'-O transesterification, which is then hydrolyzed to a 3'-phosphate (3'-P). If not degraded, poly(U) RNA would hybridize with poly(A) RNA tails and activate host dsRNA sensors. Its function is as follows. Methyltransferase that mediates mRNA cap 2'-O-ribose methylation to the 5'-cap structure of viral mRNAs. N7-methyl guanosine cap is a prerequisite for binding of nsp16. Therefore plays an essential role in viral mRNAs cap methylation which is essential to evade immune system. The polypeptide is Replicase polyprotein 1ab (rep) (Bos taurus (Bovine)).